The following is a 138-amino-acid chain: Basic phospholipase A2 Tpu-G6D49 (138 aa).

The N-terminal stretch at methionine 1 to glycine 16 is a signal peptide. 7 disulfides stabilise this stretch: cysteine 42–cysteine 131, cysteine 44–cysteine 60, cysteine 59–cysteine 111, cysteine 65–cysteine 138, cysteine 66–cysteine 104, cysteine 73–cysteine 97, and cysteine 91–cysteine 102. Ca(2+) is bound by residues tyrosine 43, glycine 45, and glycine 47. Histidine 63 is a catalytic residue. A Ca(2+)-binding site is contributed by aspartate 64. Residue aspartate 105 is part of the active site.

As to quaternary structure, monomer. Requires Ca(2+) as cofactor. As to expression, expressed by the venom gland.

The protein resides in the secreted. It catalyses the reaction a 1,2-diacyl-sn-glycero-3-phosphocholine + H2O = a 1-acyl-sn-glycero-3-phosphocholine + a fatty acid + H(+). Functionally, snake venom phospholipase A2 (PLA2) that impairs hemostasis. It weakly inhibits ADP-induced platelet aggregation when tested on platelet rich plasma from human and rabbit blood (15-25% of inhibition at 5-10 ug of enzyme), and dose-dependently inhibits blood coagulation, possibly by inhibiting thrombin activation. Also induces local edema a few hours after injection in the hind foot. Exhibits high hydrolytic activities toward L-dipalmitoyl phosphatidylcholine. PLA2 catalyzes the calcium-dependent hydrolysis of the 2-acyl groups in 3-sn-phosphoglycerides. This Craspedocephalus puniceus (Flat-nosed pitviper) protein is Basic phospholipase A2 Tpu-G6D49.